We begin with the raw amino-acid sequence, 73 residues long: Signaling peptide TAXIMIN 2 (73 aa).

The N-terminal stretch at methionine 1–alanine 27 is a signal peptide.

Confined to the vasculature of various organs, including seedling roots, leaves, cotyledons, sepals and petals. Also accumulates in root hair cells.

It localises to the secreted. Functionally, signaling peptide involved in the regulation of lateral organs separation. This is Signaling peptide TAXIMIN 2 from Arabidopsis thaliana (Mouse-ear cress).